The chain runs to 204 residues: Guanylate kinase (204 aa).

The 179-residue stretch at 6 to 184 (GLLIVLSGPA…AVDRIKAIVT (179 aa)) folds into the Guanylate kinase-like domain. 13-20 (GPAGVGKG) contacts ATP.

Belongs to the guanylate kinase family.

The protein localises to the cytoplasm. It catalyses the reaction GMP + ATP = GDP + ADP. In terms of biological role, essential for recycling GMP and indirectly, cGMP. The sequence is that of Guanylate kinase (gmk) from Halalkalibacterium halodurans (strain ATCC BAA-125 / DSM 18197 / FERM 7344 / JCM 9153 / C-125) (Bacillus halodurans).